Consider the following 234-residue polypeptide: Probable ascorbate-specific transmembrane electron transporter 1 (234 aa).

Residues 1–9 are Cytoplasmic-facing; it reads MGLGVRAAP. The chain crosses the membrane as a helical span at residues 10–30; the sequence is FTYVAHALAVAAATMVLVWCI. The region spanning 13 to 217 is the Cytochrome b561 domain; sequence VAHALAVAAA…FGASVVVAAV (205 aa). Residues 31–48 are Extracellular-facing; sequence HFRGGLAFEATNKNLIFN. A helical transmembrane segment spans residues 49–69; the sequence is VHPVLMLIGYIILGSEAIMVY. H50 is a heme b binding site. Residue 65-73 participates in L-ascorbate binding; the sequence is AIMVYKVLP. Residues 70-82 are Cytoplasmic-facing; that stretch reads KVLPTWKHDTTKL. The helical transmembrane segment at 83–103 threads the bilayer; sequence IHLILHAIALVFGAVGIYCAF. Residues H84 and H118 each coordinate heme b. Residues 104-121 lie on the Extracellular side of the membrane; it reads KFHNESGIANLYSLHSWL. Residue 114–123 participates in monodehydro-L-ascorbate radical binding; it reads LYSLHSWLGI. The chain crosses the membrane as a helical span at residues 122-142; sequence GIGTICLYGIQWIFGFVAFFF. The Cytoplasmic segment spans residues 143–151; sequence PRASPSVRK. Residues 152–172 form a helical membrane-spanning segment; the sequence is GVLPWHILFGLFVYILALATA. H157 is a binding site for heme b. Residues 173 to 194 lie on the Extracellular side of the membrane; it reads ELGFLEKLTFLQSSGLDKYGAE. A helical membrane pass occupies residues 195-215; it reads AFLVNFTALIVVLFGASVVVA. The Cytoplasmic portion of the chain corresponds to 216 to 234; sequence AVSPARVEEPHEYAPIPES.

It depends on heme b as a cofactor.

The protein localises to the membrane. In terms of biological role, two-heme-containing cytochrome. Catalyzes ascorbate-dependent trans-membrane electron transfer by utilizing a concerted H(+)/e(-) transfer mechanism. This is Probable ascorbate-specific transmembrane electron transporter 1 from Oryza sativa subsp. japonica (Rice).